The following is a 240-amino-acid chain: Sugar fermentation stimulation protein homolog (240 aa).

Belongs to the SfsA family.

The sequence is that of Sugar fermentation stimulation protein homolog from Saccharolobus islandicus (strain M.16.4 / Kamchatka #3) (Sulfolobus islandicus).